The following is a 700-amino-acid chain: Elongation factor G (700 aa).

The tr-type G domain occupies 8–290 (ERYRNIGISA…AVVEFMPSPV (283 aa)). Residues 17 to 24 (AHIDAGKT), 88 to 92 (DTPGH), and 142 to 145 (NKMD) each bind GTP.

This sequence belongs to the TRAFAC class translation factor GTPase superfamily. Classic translation factor GTPase family. EF-G/EF-2 subfamily.

It is found in the cytoplasm. In terms of biological role, catalyzes the GTP-dependent ribosomal translocation step during translation elongation. During this step, the ribosome changes from the pre-translocational (PRE) to the post-translocational (POST) state as the newly formed A-site-bound peptidyl-tRNA and P-site-bound deacylated tRNA move to the P and E sites, respectively. Catalyzes the coordinated movement of the two tRNA molecules, the mRNA and conformational changes in the ribosome. The chain is Elongation factor G from Albidiferax ferrireducens (strain ATCC BAA-621 / DSM 15236 / T118) (Rhodoferax ferrireducens).